The primary structure comprises 331 residues: Elongation factor Ts, mitochondrial (331 aa).

The transit peptide at 1-14 (MIVSRQVIRSVVRK) directs the protein to the mitochondrion.

It belongs to the EF-Ts family.

The protein localises to the mitochondrion. Its function is as follows. Associates with the EF-Tu.GDP complex and induces the exchange of GDP to GTP. It remains bound to the aminoacyl-tRNA.EF-Tu.GTP complex up to the GTP hydrolysis stage on the ribosome. In Brugia malayi (Filarial nematode worm), this protein is Elongation factor Ts, mitochondrial.